Reading from the N-terminus, the 220-residue chain is Probable septum site-determining protein MinC (220 aa).

This sequence belongs to the MinC family. Interacts with MinD and FtsZ.

Its function is as follows. Cell division inhibitor that blocks the formation of polar Z ring septums. Rapidly oscillates between the poles of the cell to destabilize FtsZ filaments that have formed before they mature into polar Z rings. Prevents FtsZ polymerization. The polypeptide is Probable septum site-determining protein MinC (Photobacterium profundum (strain SS9)).